A 504-amino-acid chain; its full sequence is Chorion-specific transcription factor GCMb (504 aa).

The segment at residues 19 to 174 is a DNA-binding region (GCM); sequence LTWDINDPQM…KSETEGRRSA (156 aa). Cysteine 81, cysteine 87, cysteine 91, cysteine 118, cysteine 121, cysteine 130, histidine 157, and histidine 159 together coordinate Zn(2+). Composition is skewed to basic and acidic residues over residues 155–172 and 188–203; these read GVHDHPRPESKSETEGRR and RRSEEPEARSTQDIRG. The segment at 155–203 is disordered; that stretch reads GVHDHPRPESKSETEGRRSALKRQMASFYQPQKRRSEEPEARSTQDIRG. The tract at residues 379 to 393 is C-terminal conserved inhibitory domain (CCID); sequence LQTVITTTVAYQAYQ. The interval 438–472 is disordered; the sequence is ASPSGRAPLKVPGDCQAPRPTLDFPQEADPSGTDG.

The protein resides in the nucleus. Its function is as follows. Transcription factor that binds specific sequences on gene promoters and activate their transcription. Through the regulation of gene transcription, may play a role in parathyroid gland development. The sequence is that of Chorion-specific transcription factor GCMb from Mus musculus (Mouse).